Here is a 441-residue protein sequence, read N- to C-terminus: N-succinylarginine dihydrolase (441 aa).

Residues 19-28 (AGLSFGNEAS), N110, and 137-138 (HR) each bind substrate. The active site involves E174. R212 is a binding site for substrate. H248 is an active-site residue. Residues D250 and N359 each coordinate substrate. Residue C365 is the Nucleophile of the active site.

This sequence belongs to the succinylarginine dihydrolase family. Homodimer.

The enzyme catalyses N(2)-succinyl-L-arginine + 2 H2O + 2 H(+) = N(2)-succinyl-L-ornithine + 2 NH4(+) + CO2. It functions in the pathway amino-acid degradation; L-arginine degradation via AST pathway; L-glutamate and succinate from L-arginine: step 2/5. Functionally, catalyzes the hydrolysis of N(2)-succinylarginine into N(2)-succinylornithine, ammonia and CO(2). The polypeptide is N-succinylarginine dihydrolase (Erwinia tasmaniensis (strain DSM 17950 / CFBP 7177 / CIP 109463 / NCPPB 4357 / Et1/99)).